A 216-amino-acid chain; its full sequence is Cytidylate kinase (216 aa).

Position 10-18 (glycine 10–threonine 18) interacts with ATP.

It belongs to the cytidylate kinase family. Type 1 subfamily.

It is found in the cytoplasm. It carries out the reaction CMP + ATP = CDP + ADP. The catalysed reaction is dCMP + ATP = dCDP + ADP. This is Cytidylate kinase from Macrococcus caseolyticus (strain JCSC5402) (Macrococcoides caseolyticum).